A 333-amino-acid polypeptide reads, in one-letter code: Beta-ketoacyl-[acyl-carrier-protein] synthase III (333 aa).

Catalysis depends on residues C112 and H255. Positions 256–260 (QANQR) are ACP-binding. N285 is an active-site residue.

This sequence belongs to the thiolase-like superfamily. FabH family. In terms of assembly, homodimer.

The protein resides in the cytoplasm. It catalyses the reaction malonyl-[ACP] + acetyl-CoA + H(+) = 3-oxobutanoyl-[ACP] + CO2 + CoA. It participates in lipid metabolism; fatty acid biosynthesis. Functionally, catalyzes the condensation reaction of fatty acid synthesis by the addition to an acyl acceptor of two carbons from malonyl-ACP. Catalyzes the first condensation reaction which initiates fatty acid synthesis and may therefore play a role in governing the total rate of fatty acid production. Possesses both acetoacetyl-ACP synthase and acetyl transacylase activities. Its substrate specificity determines the biosynthesis of branched-chain and/or straight-chain of fatty acids. In Synechococcus sp. (strain RCC307), this protein is Beta-ketoacyl-[acyl-carrier-protein] synthase III.